Reading from the N-terminus, the 194-residue chain is Clathrin light chain (194 aa).

Residues 44-156 form a disordered region; the sequence is TTFDNSNNNN…TDSTSGNTTH (113 aa). Low complexity predominate over residues 48–65; it reads NSNNNNNNNNHNNNSYNS. 2 stretches are compositionally biased toward basic and acidic residues: residues 89 to 115 and 124 to 146; these read EYLE…KIAE and YSER…KSLE. Residues 124-194 are required for binding clathrin heavy chain, localization to punctae, and for cytokinesis and fruiting body development; sequence YSEREAKKKT…LIRLKNQPIV (71 aa). Residues 147–156 show a composition bias toward polar residues; it reads TDSTSGNTTH.

Belongs to the clathrin light chain family. As to quaternary structure, clathrin coats are formed from molecules containing 3 heavy chains and 3 light chains.

It is found in the cytoplasmic vesicle membrane. The protein resides in the membrane. Its subcellular location is the coated pit. Its function is as follows. Clathrin is the major protein of the polyhedral coat of coated pits and vesicles. In Dictyostelium discoideum (Social amoeba), this protein is Clathrin light chain (clc).